The primary structure comprises 351 residues: Photosystem II D2 protein (351 aa).

A helical transmembrane segment spans residues 39-59 (CAYMAIGGWLTGTTFATSWYT). Histidine 116 contacts chlorophyll a. A helical transmembrane segment spans residues 123 to 139 (GFMLRQFEIARLVGVRP). Pheophytin a contacts are provided by glutamine 128 and asparagine 141. A helical membrane pass occupies residues 151-164 (LFVSVFLIYPLGQS). Histidine 196 serves as a coordination point for chlorophyll a. The chain crosses the membrane as a helical span at residues 206–226 (GALLCAIHGATVENTLFEDGD). 2 residues coordinate a plastoquinone: histidine 213 and phenylalanine 260. Histidine 213 is a Fe cation binding site. Histidine 267 serves as a coordination point for Fe cation. Residues 277–293 (GLWMSAIGVVGLALNLR) traverse the membrane as a helical segment.

The protein belongs to the reaction center PufL/M/PsbA/D family. In terms of assembly, PSII is composed of 1 copy each of membrane proteins PsbA, PsbB, PsbC, PsbD, PsbE, PsbF, PsbH, PsbI, PsbJ, PsbK, PsbL, PsbM, PsbT, PsbX, PsbY, PsbZ, Psb30/Ycf12, peripheral proteins PsbO, CyanoQ (PsbQ), PsbU, PsbV and a large number of cofactors. It forms dimeric complexes. The D1/D2 heterodimer binds P680, chlorophylls that are the primary electron donor of PSII, and subsequent electron acceptors. It shares a non-heme iron and each subunit binds pheophytin, quinone, additional chlorophylls, carotenoids and lipids. There is also a Cl(-1) ion associated with D1 and D2, which is required for oxygen evolution. The PSII complex binds additional chlorophylls, carotenoids and specific lipids. is required as a cofactor.

It localises to the cellular thylakoid membrane. It catalyses the reaction 2 a plastoquinone + 4 hnu + 2 H2O = 2 a plastoquinol + O2. Photosystem II (PSII) is a light-driven water:plastoquinone oxidoreductase that uses light energy to abstract electrons from H(2)O, generating O(2) and a proton gradient subsequently used for ATP formation. It consists of a core antenna complex that captures photons, and an electron transfer chain that converts photonic excitation into a charge separation. The D1/D2 (PsbA/PsbD) reaction center heterodimer binds P680, the primary electron donor of PSII as well as several subsequent electron acceptors. D2 is needed for assembly of a stable PSII complex. In Prochlorothrix hollandica, this protein is Photosystem II D2 protein.